A 429-amino-acid chain; its full sequence is Stromal membrane-associated protein 2 (429 aa).

Residues 13 to 137 (QAVLANLLLE…LDINAFRKEK (125 aa)) form the Arf-GAP domain. A C4-type zinc finger spans residues 28–51 (CADCQSKGPRWASWNIGVFICIRC). At Ser-127 the chain carries Phosphoserine. The span at 138 to 172 (DNKWKRGSEPAPEKKMEPVVFEKVKMPQKKEDPQL) shows a compositional bias: basic and acidic residues. 2 disordered regions span residues 138-181 (DNKW…PKSK) and 217-263 (VSSP…KKQL). The interaction with clathrin heavy chains stretch occupies residues 163-232 (MPQKKEDPQL…SVSRKVVGSM (70 aa)). The span at 217–231 (VSSPSSSVSRKVVGS) shows a compositional bias: low complexity. Phosphoserine occurs at positions 219, 223, 225, 231, and 240. Over residues 253–263 (SKSEETSKKQL) the composition is skewed to basic and acidic residues. The segment at 340–429 (MGGMQASMMG…NQTLSPQMWK (90 aa)) is interaction with PICALM.

In terms of assembly, interacts with ARF1. Interacts with PICALM and clathrin heavy chains.

Its subcellular location is the cytoplasm. GTPase activating protein that acts on ARF1. Can also activate ARF6 (in vitro). May play a role in clathrin-dependent retrograde transport from early endosomes to the trans-Golgi network. The polypeptide is Stromal membrane-associated protein 2 (SMAP2) (Bos taurus (Bovine)).